Here is a 761-residue protein sequence, read N- to C-terminus: Dipeptidyl-peptidase 4 (761 aa).

The first 15 residues, 1-15, serve as a signal peptide directing secretion; it reads MTLSAWIILVTLAMA. Catalysis depends on charge relay system residues serine 622, aspartate 706, and histidine 738.

The protein belongs to the peptidase S9C family.

The protein resides in the membrane. In terms of biological role, may be involved in metabolism of dipeptides or may affect host defense mechanisms. This Giardia intestinalis (Giardia lamblia) protein is Dipeptidyl-peptidase 4 (DPP).